Here is a 215-residue protein sequence, read N- to C-terminus: Chaperone protein TorD (215 aa).

Belongs to the TorD/DmsD family. TorD subfamily.

Its subcellular location is the cytoplasm. Involved in the biogenesis of TorA. Acts on TorA before the insertion of the molybdenum cofactor and, as a result, probably favors a conformation of the apoenzyme that is competent for acquiring the cofactor. The sequence is that of Chaperone protein TorD from Aliivibrio fischeri (strain ATCC 700601 / ES114) (Vibrio fischeri).